A 217-amino-acid chain; its full sequence is Probable cutinase 3 (217 aa).

An N-terminal signal peptide occupies residues Met-1–Ala-17. 2 cysteine pairs are disulfide-bonded: Cys-39–Cys-118 and Cys-65–Cys-79. Ser-129 acts as the Nucleophile in catalysis. Cys-180 and Cys-187 are joined by a disulfide. Asp-184 is an active-site residue. His-197 acts as the Proton donor/acceptor in catalysis.

Belongs to the cutinase family.

The protein resides in the secreted. It catalyses the reaction cutin + H2O = cutin monomers.. Catalyzes the hydrolysis of complex carboxylic polyesters found in the cell wall of plants. Degrades cutin, a macromolecule that forms the structure of the plant cuticle. This chain is Probable cutinase 3, found in Neosartorya fischeri (strain ATCC 1020 / DSM 3700 / CBS 544.65 / FGSC A1164 / JCM 1740 / NRRL 181 / WB 181) (Aspergillus fischerianus).